The chain runs to 272 residues: Aurora kinase (272 aa).

The Protein kinase domain maps to phenylalanine 10–isoleucine 263. Residues leucine 16 to valine 24 and lysine 39 contribute to the ATP site. Catalysis depends on aspartate 134, which acts as the Proton acceptor.

Belongs to the protein kinase superfamily. Ser/Thr protein kinase family. Aurora subfamily.

The protein localises to the nucleus. It is found in the cytoplasm. It localises to the cytoskeleton. The protein resides in the spindle. Its subcellular location is the chromosome. The protein localises to the centromere. It is found in the kinetochore. It catalyses the reaction L-seryl-[protein] + ATP = O-phospho-L-seryl-[protein] + ADP + H(+). The catalysed reaction is L-threonyl-[protein] + ATP = O-phospho-L-threonyl-[protein] + ADP + H(+). Functionally, component of the chromosomal passenger complex (CPC), a complex that acts as a key regulator of chromosome segregation and cytokinesis. Has a role in error-correction of aberrent kinetochore-microtubule attachments to ensure that sister kinetochores become bioriented and connect to opposite poles by promoting spindle assembly checkpoint signaling. This Encephalitozoon cuniculi (strain GB-M1) (Microsporidian parasite) protein is Aurora kinase (IPL1).